Reading from the N-terminus, the 157-residue chain is Class I hydrophobin rodA (157 aa).

A signal peptide spans 1-41; it reads MKFSIAAAVVAFAASVAALPPAHDSQFAGNGVGNKGNSNVK. A glycan (N-linked (GlcNAc...) asparagine) is linked at N47. 4 disulfides stabilise this stretch: C57–C131, C65–C125, C66–C106, and C132–C150.

This sequence belongs to the fungal hydrophobin family. Self-assembles to form functional amyloid fibrils called rodlets. Self-assembly into fibrillar rodlets occurs spontaneously at hydrophobic:hydrophilic interfaces and the rodlets further associate laterally to form amphipathic monolayers.

It localises to the secreted. Its subcellular location is the spore wall. Its function is as follows. Aerial growth, conidiation, and dispersal of filamentous fungi in the environment rely upon a capability of their secreting small amphipathic proteins called hydrophobins (HPBs) with low sequence identity. Class I can self-assemble into an outermost layer of rodlet bundles on aerial cell surfaces, conferring cellular hydrophobicity that supports fungal growth, development and dispersal; whereas Class II form highly ordered films at water-air interfaces through intermolecular interactions but contribute nothing to the rodlet structure. RodA is a class I hydrophobin that contributes to surface hydrophobicity, which is important for processes such as association of hyphae in reproductive structures, dispersal of aerial spores and adhesion of pathogens to host structures. Important for the formation of hydrophobic rodlet layers of asexually-produced spores. Promotes also biofilm formation and may enhance lignocellulose utilization via promoting a compact substrate-enzyme-fungus structure. The chain is Class I hydrophobin rodA from Emericella nidulans (strain FGSC A4 / ATCC 38163 / CBS 112.46 / NRRL 194 / M139) (Aspergillus nidulans).